An 852-amino-acid polypeptide reads, in one-letter code: Pentatricopeptide repeat-containing protein At5g02830, chloroplastic (852 aa).

A chloroplast-targeting transit peptide spans 1–25 (MRDFVIVFGSSSAITNPHHHHRRCY). The segment at 17-60 (PHHHHRRCYATAPESNRKTKSNSSFTKLLPSLPQQHSPSPASVS) is disordered. The span at 44-58 (LLPSLPQQHSPSPAS) shows a compositional bias: low complexity. PPR repeat units follow at residues 334-364 (DMTSYNILLKTCCLAGRVDLAQDIYKEAKRM), 373-407 (DAFTYCTIIKVFADAKMWKWALKVKDDMKSVGVTP), 408-442 (NTHTWSSLISACANAGLVEQANHLFEEMLASGCEP), 443-477 (NSQCFNILLHACVEACQYDRAFRLFQSWKGSSVNE), 525-557 (TTATYNILLKACGTDYYRGKELMDEMKSLGLSP), 558-592 (NQITWSTLIDMCGGSGDVEGAVRILRTMHSAGTRP), 593-627 (DVVAYTTAIKICAENKCLKLAFSLFEEMRRYQIKP), and 628-665 (NWVTYNTLLKARSKYGSLLEVRQCLAIYQDMRNAGYKP).

Belongs to the PPR family. P subfamily.

The protein resides in the plastid. It is found in the chloroplast. The protein is Pentatricopeptide repeat-containing protein At5g02830, chloroplastic of Arabidopsis thaliana (Mouse-ear cress).